The sequence spans 889 residues: Disease resistance protein UNI (889 aa).

A coiled-coil region spans residues 19 to 64 (NCLIGKSYIRTLEKNLRALQREMEDLRAIQHEVQNKVARDEARHQR). Residues 131–152 (GNFDEVSQPPPRSEVEERPTQP) form a disordered region. An NB-ARC domain is found at 137–440 (SQPPPRSEVE…CEGFIGEDQV (304 aa)). ATP is bound at residue 179 to 186 (GMGGVGKT). LRR repeat units follow at residues 510-532 (WGAV…ESKC), 533-555 (SELT…FIRY), 557-580 (QKLV…ISGL), 581-603 (VSLQ…LKEL), 604-625 (KKLT…GISR), 626-652 (LLSL…LQQL), 653-676 (QNLQ…LAKL), 698-721 (MENL…ESET), and 825-848 (CPKL…EIHM).

Belongs to the disease resistance NB-LRR family. In terms of assembly, interacts with RPT2A.

Involved in disease resistance via the salicylic acid (SA) signaling pathway. Involved in shoot architecture development via the cytokinin signaling pathway. The polypeptide is Disease resistance protein UNI (Arabidopsis thaliana (Mouse-ear cress)).